We begin with the raw amino-acid sequence, 319 residues long: ATP-dependent 6-phosphofructokinase (319 aa).

Position 11 (Gly-11) interacts with ATP. ADP is bound at residue 21 to 25; that stretch reads RAVVR. Residues 72–73 and 102–105 each bind ATP; these read RC and GDGS. Asp-103 contributes to the Mg(2+) binding site. Substrate is bound at residue 125 to 127; sequence TID. Asp-127 acts as the Proton acceptor in catalysis. Residue Arg-154 participates in ADP binding. Residues Arg-162 and 169 to 171 each bind substrate; that span reads MGR. Residues 185–187, Arg-211, and 213–215 each bind ADP; these read GAE and KKH. Residues Glu-222, Arg-243, and 249–252 each bind substrate; that span reads HIQR.

Belongs to the phosphofructokinase type A (PFKA) family. ATP-dependent PFK group I subfamily. Prokaryotic clade 'B1' sub-subfamily. Homotetramer. It depends on Mg(2+) as a cofactor.

The protein resides in the cytoplasm. The enzyme catalyses beta-D-fructose 6-phosphate + ATP = beta-D-fructose 1,6-bisphosphate + ADP + H(+). The protein operates within carbohydrate degradation; glycolysis; D-glyceraldehyde 3-phosphate and glycerone phosphate from D-glucose: step 3/4. Its activity is regulated as follows. Allosterically activated by ADP and other diphosphonucleosides, and allosterically inhibited by phosphoenolpyruvate. In terms of biological role, catalyzes the phosphorylation of D-fructose 6-phosphate to fructose 1,6-bisphosphate by ATP, the first committing step of glycolysis. This is ATP-dependent 6-phosphofructokinase from Bacillus pumilus (strain SAFR-032).